A 408-amino-acid chain; its full sequence is Serine/threonine-protein kinase UCNL (408 aa).

One can recognise a Protein kinase domain in the interval 21 to 341 (IKALKILGKG…AAEIKELAFF (321 aa)). Residues 27–35 (LGKGATGTV) and Lys-54 each bind ATP. The active-site Proton acceptor is the Asp-152. The AGC-kinase C-terminal domain maps to 342–408 (AGVRWDLLTE…CRKNDPFIEF (67 aa)).

It belongs to the protein kinase superfamily. AGC Ser/Thr protein kinase family. In terms of tissue distribution, expressed in the epidermis and cortex of the transition zone of the root apex. Expressed in rosette leaves, stems, flowers and siliques.

It is found in the cytoplasm. The protein localises to the nucleus. The enzyme catalyses L-seryl-[protein] + ATP = O-phospho-L-seryl-[protein] + ADP + H(+). It carries out the reaction L-threonyl-[protein] + ATP = O-phospho-L-threonyl-[protein] + ADP + H(+). Functionally, regulates planar ovule integument development. The chain is Serine/threonine-protein kinase UCNL from Arabidopsis thaliana (Mouse-ear cress).